Reading from the N-terminus, the 443-residue chain is Serine transporter (443 aa).

11 helical membrane passes run 38 to 60 (TGWV…PVQV), 65 to 87 (LWVF…RLFI), 111 to 131 (WGIL…FVYS), 150 to 170 (GLLS…VAIS), 183 to 203 (GMVL…VGMW), 215 to 235 (GLLV…ILFI), 265 to 285 (IAFG…TLAM), 319 to 339 (VSVI…YLGF), 368 to 388 (GIMI…APVL), 390 to 410 (FTSI…AWLV), and 422 to 442 (MSLY…FLAF).

It belongs to the amino acid/polyamine transporter 2 family. SdaC/TdcC subfamily.

Its subcellular location is the cell inner membrane. Functionally, transports both D- and L-serine; allows growth of strain CFT073 cells normally unable to transport D-serine on that substrate. Transport relies on the H(+) gradient and is not competed by L-threonine. May play a role in L-cysteine detoxification. This chain is Serine transporter, found in Escherichia coli O157:H7.